A 523-amino-acid chain; its full sequence is DNA-(apurinic or apyrimidinic site) endonuclease 2 (523 aa).

Residue Glu-42 participates in Mg(2+) binding. Tyr-151 is an active-site residue. The Mg(2+) site is built by Asp-191, Asn-193, and Asp-294. Asp-191 acts as the Proton donor/acceptor in catalysis. The segment at 348-392 is disordered; the sequence is MKKNKNNSPTQSENVSASASSGSSPTVSRANSVIDVDAYPPEKRR. The span at 353–362 shows a compositional bias: polar residues; it reads NNSPTQSENV. Zn(2+) contacts are provided by Cys-458, His-461, Cys-484, and Cys-508. The segment at 458–517 adopts a GRF-type zinc-finger fold; it reads CEGHKEPCKYLTVRKPGINYGRKFWICARPVGELIKNSNAVSEEDTQPFQCRFFIWDSDW.

This sequence belongs to the DNA repair enzymes AP/ExoA family. The cofactor is Mg(2+). It depends on Mn(2+) as a cofactor.

The protein resides in the nucleus. The catalysed reaction is Exonucleolytic cleavage in the 3'- to 5'-direction to yield nucleoside 5'-phosphates.. Functionally, DNA repair enzyme that cleaves apurinic/apyrimidinic (AP) sites and removes 3'-blocking groups present at single strand breaks of damaged DNA. Provides the majority of the AP-endonuclease (APE) activity. Repairs phleomycin D1-induced DNA damage. Plays a role in oxidative damage repair. This is DNA-(apurinic or apyrimidinic site) endonuclease 2 (apn2) from Schizosaccharomyces pombe (strain 972 / ATCC 24843) (Fission yeast).